The primary structure comprises 109 residues: Nucleoid-associated protein LJ_0424 (109 aa).

Belongs to the YbaB/EbfC family. In terms of assembly, homodimer.

Its subcellular location is the cytoplasm. The protein resides in the nucleoid. Its function is as follows. Binds to DNA and alters its conformation. May be involved in regulation of gene expression, nucleoid organization and DNA protection. The sequence is that of Nucleoid-associated protein LJ_0424 from Lactobacillus johnsonii (strain CNCM I-12250 / La1 / NCC 533).